The following is a 208-amino-acid chain: MARYTDSSCRICRRETMKLYLKGDRCYSDKCAVERRNYPPGQHGQGRGKFSDYGLQLREKQKIRRMYGLVEKQFKTYFKHADRQKGVTGTNFLTLLERRIDNTVYRLGFASSRAQARQLVRHSHFLVNGKKVNIPSFLLRPGDSVSVVEGSRQLQMINEAMEAMPRRGLPPWLELDKAKYEGVFKTLPTREEMNLPVQEQLVVEFYSK.

Residues 98–160 (RRIDNTVYRL…SRQLQMINEA (63 aa)) enclose the S4 RNA-binding domain.

It belongs to the universal ribosomal protein uS4 family. Part of the 30S ribosomal subunit. Contacts protein S5. The interaction surface between S4 and S5 is involved in control of translational fidelity.

Functionally, one of the primary rRNA binding proteins, it binds directly to 16S rRNA where it nucleates assembly of the body of the 30S subunit. In terms of biological role, with S5 and S12 plays an important role in translational accuracy. The sequence is that of Small ribosomal subunit protein uS4 from Syntrophobacter fumaroxidans (strain DSM 10017 / MPOB).